The primary structure comprises 178 residues: Large ribosomal subunit protein uL6 (178 aa).

It belongs to the universal ribosomal protein uL6 family. As to quaternary structure, part of the 50S ribosomal subunit.

Functionally, this protein binds to the 23S rRNA, and is important in its secondary structure. It is located near the subunit interface in the base of the L7/L12 stalk, and near the tRNA binding site of the peptidyltransferase center. This chain is Large ribosomal subunit protein uL6, found in Lactococcus lactis subsp. lactis (strain IL1403) (Streptococcus lactis).